Consider the following 904-residue polypeptide: Phosphoenolpyruvate carboxylase (904 aa).

The tract at residues 52–71 (ISRRESDAPPSTLSEQLTGR) is disordered. Active-site residues include His-151 and Lys-570.

Belongs to the PEPCase type 1 family. Mg(2+) is required as a cofactor.

The catalysed reaction is oxaloacetate + phosphate = phosphoenolpyruvate + hydrogencarbonate. Forms oxaloacetate, a four-carbon dicarboxylic acid source for the tricarboxylic acid cycle. This Xanthomonas oryzae pv. oryzae (strain MAFF 311018) protein is Phosphoenolpyruvate carboxylase.